We begin with the raw amino-acid sequence, 283 residues long: Pantothenate synthetase (283 aa).

30 to 37 is a binding site for ATP; it reads MGNLHDGH. Histidine 37 acts as the Proton donor in catalysis. (R)-pantoate is bound at residue glutamine 61. Residue glutamine 61 coordinates beta-alanine. 149-152 serves as a coordination point for ATP; sequence GEKD. Position 155 (glutamine 155) interacts with (R)-pantoate. Position 186 to 189 (186 to 189) interacts with ATP; sequence LSSR.

The protein belongs to the pantothenate synthetase family. Homodimer.

Its subcellular location is the cytoplasm. It carries out the reaction (R)-pantoate + beta-alanine + ATP = (R)-pantothenate + AMP + diphosphate + H(+). It functions in the pathway cofactor biosynthesis; (R)-pantothenate biosynthesis; (R)-pantothenate from (R)-pantoate and beta-alanine: step 1/1. Its function is as follows. Catalyzes the condensation of pantoate with beta-alanine in an ATP-dependent reaction via a pantoyl-adenylate intermediate. This Escherichia coli O45:K1 (strain S88 / ExPEC) protein is Pantothenate synthetase.